A 495-amino-acid polypeptide reads, in one-letter code: ATP synthase subunit alpha, chloroplastic (495 aa).

Position 170–177 (170–177) interacts with ATP; the sequence is GDRQTGKT.

This sequence belongs to the ATPase alpha/beta chains family. As to quaternary structure, F-type ATPases have 2 components, CF(1) - the catalytic core - and CF(0) - the membrane proton channel. CF(1) has five subunits: alpha(3), beta(3), gamma(1), delta(1), epsilon(1). CF(0) has four main subunits: a, b, b' and c.

Its subcellular location is the plastid. It is found in the chloroplast thylakoid membrane. It carries out the reaction ATP + H2O + 4 H(+)(in) = ADP + phosphate + 5 H(+)(out). Its function is as follows. Produces ATP from ADP in the presence of a proton gradient across the membrane. The alpha chain is a regulatory subunit. This Cyanidioschyzon merolae (strain NIES-3377 / 10D) (Unicellular red alga) protein is ATP synthase subunit alpha, chloroplastic.